An 859-amino-acid polypeptide reads, in one-letter code: Paladin (859 aa).

A disordered region spans residues 1-34 (MGTTASTAQQTVSAGTSLEGLQGGSSSSMDSQHS). Glycine 2 is lipidated: N-myristoyl glycine. Serine 89 bears the Phosphoserine mark.

This sequence belongs to the paladin family. In terms of tissue distribution, vascular expression detected in the central nervous system, kidney, lung, heart, skeletal muscle, white adipose tissue (WAT), brown adipose tissue, liver, pancreas and spleen. Not expressed in all vessels: for instance, not expressed in capillaries in the brain, and expressed mainly in large vessels in the heart, WAT, liver, pancreas and kidney. Predominant nonvascular expression in myocardium and lung mesenchyme. In large vessels, primarily expressed by smooth muscle cells, but occasionally detected at low levels in the endothelium. Expressed in various cells of the hematopoietic lineage.

It localises to the cytoplasm. The protein localises to the cytosol. This chain is Paladin (Pald1), found in Mus musculus (Mouse).